The primary structure comprises 556 residues: Genetic interactor of prohibitins 3, mitochondrial (556 aa).

The N-terminal 21 residues, 1 to 21, are a transit peptide targeting the mitochondrion; the sequence is MLNLCHALRGVRQFSCSVIVK. In terms of domain architecture, CP-type G spans 113–305; the sequence is ESTLNDILNY…LFDLPGYSTS (193 aa).

It belongs to the TRAFAC class YlqF/YawG GTPase family. GEP3 subfamily.

It is found in the mitochondrion. Interacts genetically with prohibitins and thus may be involved in the mitochondrial lipid metabolism. This is Genetic interactor of prohibitins 3, mitochondrial (GEP3) from Saccharomyces cerevisiae (strain YJM789) (Baker's yeast).